The primary structure comprises 64 residues: MVTVKFKYKGEEKEVDTSKIKKVWRVGKMISFTYDEGGGKTGRGAVSEKDAPKELLQMLEKQKK.

An N6-methyllysine mark is found at lysine 5 and lysine 7.

Belongs to the 7 kDa DNA-binding/endoribonuclease P2 family. Monomer. Post-translationally, lys-5 and Lys-7 may be methylated.

The protein resides in the cytoplasm. In terms of biological role, can constrain negative DNA supercoils. May be involved in maintaining the integrity of the genome at high temperature. The protein is DNA-binding protein 7b of Saccharolobus shibatae (strain ATCC 51178 / DSM 5389 / JCM 8931 / NBRC 15437 / B12) (Sulfolobus shibatae).